A 1093-amino-acid chain; its full sequence is ATP-dependent helicase/deoxyribonuclease subunit B (1093 aa).

Belongs to the helicase family. AddB/RexB type 2 subfamily. Heterodimer of AddA and RexB. Requires Mg(2+) as cofactor.

Its function is as follows. The heterodimer acts as both an ATP-dependent DNA helicase and an ATP-dependent, dual-direction single-stranded exonuclease. Recognizes the chi site generating a DNA molecule suitable for the initiation of homologous recombination. This subunit has 5' -&gt; 3' nuclease activity but not helicase activity. This chain is ATP-dependent helicase/deoxyribonuclease subunit B, found in Streptococcus sanguinis (strain SK36).